The sequence spans 216 residues: Probable nicotinate-nucleotide adenylyltransferase (216 aa).

This sequence belongs to the NadD family.

The enzyme catalyses nicotinate beta-D-ribonucleotide + ATP + H(+) = deamido-NAD(+) + diphosphate. Its pathway is cofactor biosynthesis; NAD(+) biosynthesis; deamido-NAD(+) from nicotinate D-ribonucleotide: step 1/1. Functionally, catalyzes the reversible adenylation of nicotinate mononucleotide (NaMN) to nicotinic acid adenine dinucleotide (NaAD). This Marinobacter nauticus (strain ATCC 700491 / DSM 11845 / VT8) (Marinobacter aquaeolei) protein is Probable nicotinate-nucleotide adenylyltransferase.